Consider the following 367-residue polypeptide: 2-aminoethylphosphonate--pyruvate transaminase (367 aa).

At lysine 193 the chain carries N6-(pyridoxal phosphate)lysine.

This sequence belongs to the class-V pyridoxal-phosphate-dependent aminotransferase family. PhnW subfamily. In terms of assembly, homodimer. Pyridoxal 5'-phosphate serves as cofactor.

It catalyses the reaction (2-aminoethyl)phosphonate + pyruvate = phosphonoacetaldehyde + L-alanine. Its function is as follows. Involved in phosphonate degradation. This Vibrio vulnificus (strain CMCP6) protein is 2-aminoethylphosphonate--pyruvate transaminase.